We begin with the raw amino-acid sequence, 1426 residues long: Epidermal growth factor receptor (1426 aa).

Residues 1-30 (MLLRRRNGPCPFPLLLLLLAHCICIWPASA) form the signal peptide. The Extracellular portion of the chain corresponds to 31-868 (ARDRYARQNN…SKITANLDVN (838 aa)). 11 N-linked (GlcNAc...) asparagine glycosylation sites follow: Asn128, Asn241, Asn419, Asn443, Asn482, Asn569, Asn599, Asn617, Asn816, Asn823, and Asn828. A helical transmembrane segment spans residues 869-889 (MIFIITGAVLVPTICILCVVT). The Cytoplasmic segment spans residues 890–1426 (YICRQKQKAK…HRNRNTETRV (537 aa)). The residue at position 902 (Thr902) is a Phosphothreonine; by PKC. The Protein kinase domain maps to 938–1198 (LRKGGVLGMG…QLTTVFAEFA (261 aa)). Residues 944 to 952 (LGMGAFGRV) and Lys971 each bind ATP. The active-site Proton acceptor is Asp1063. The disordered stretch occupies residues 1232 to 1297 (PTTDGSEAIA…DSSAREVGVG (66 aa)). The segment covering 1257-1276 (HRTDCTDEMPKLNRYCKDPS) has biased composition (basic and acidic residues). The residue at position 1310 (Tyr1310) is a Phosphotyrosine; by autocatalysis.

The protein belongs to the protein kinase superfamily. Tyr protein kinase family. EGF receptor subfamily. Homodimer. Binding of the ligand spitz triggers homodimerization of the receptor however, it is able to form dimers, albeit weakly, in the absence of spitz. Interacts (when phosphorylated on tyrosine residues) with Vav (via SH2 domain). Interacts (when ubiquitinated) with Graf. May interact (when phosphorylated) with EGFRAP (via SH2 domain). Ubiquitination by Cbl in response to high spi, promotes its interaction with Graf and thus facilitates its GPI-enriched endocytic compartment (GEEC) mediated endocytosis and its subsequent degradation. As to expression, ubiquitously expressed in embryos. In larvae, uniform expression is seen in wing disks, genital disk, anlagen of testis and ovary, and brain cortex. In eye-antenna disk, highest expression is anterior to morphogenetic furrow, levels remain high in photoreceptor precursor cells. This pattern is reversed in posterior eye disk. In adults expression is high in brain cortex and thoracic and abdominal ganglia.

It localises to the membrane. It carries out the reaction L-tyrosyl-[protein] + ATP = O-phospho-L-tyrosyl-[protein] + ADP + H(+). Receptor tyrosine kinase, binding ligands of the EGF family and activating several signaling cascades to convert extracellular cues into appropriate cellular responses. Known ligands include spitz, gurken, vein and giant-lens. Transduces the signal through the ras-raf-MAPK pathway. Critical for the proliferation of imaginal tissues, and for the determination of both the antero-posterior and dorso-ventral polarities of the oocyte. In the embryo, plays a role in the establishment of ventral cell fates, maintenance of amnioserosa and ventral neuroectodermal cells, germ band retraction, cell fate specification in the central nervous system, and production and repair of the cuticle. During dorsal closure (DC) functions with the dpp- and ACK-signaling pathways to regulate expression of the myosin zip in the embryonic epidermis and amnioserosa (AS), and thus coordinate the progression of epidermal cell shape changes required for correct DC. In the embryonic epidermis, functions by negatively regulating dpp and consequently the dpp-dependent expression of the myosin zip. In the AS, negatively regulates the production/ and or secretion of a diffusible signal which, is produced by the ACK-signaling pathway, and acts in the AS and epidermal cells to promote zip expression. Also required in the AS to inhibit or delay apoptosis, and consequently slow the rate of DC. Therefore functions at multiple levels to negatively regulate morphogenesis during DC, suggesting that it acts as a general brake mechanism for adjusting the rate of dorsal closure to ensure that closure proceeds smoothly and without loss of epidermal integrity. During oogenesis, one of two tyrosine kinase chemoattractant receptors (Egfr and Pvr), that function in the border cells (BC) to detect guidance cues from the oocyte and transduce this information to the guidance pathway that regulate the collective migration of the BC cluster through the nurse cells to the oocyte. In Drosophila melanogaster (Fruit fly), this protein is Epidermal growth factor receptor (Egfr).